A 430-amino-acid chain; its full sequence is Tektin-2 (430 aa).

2 coiled-coil regions span residues 82–160 (LTDL…QAFE) and 273–379 (EKVY…DIAC).

The protein belongs to the tektin family. In terms of assembly, microtubule inner protein component of sperm flagellar doublet microtubules. May interact with CCDC172. In terms of processing, tyrosine phosphorylated. Ubiquitinated, leading to its degradation. Deubiquitinated by USP16, promoting its stability.

Its subcellular location is the cytoplasm. The protein localises to the cytoskeleton. The protein resides in the cilium axoneme. It is found in the flagellum axoneme. It localises to the microtubule organizing center. Microtubule inner protein (MIP) part of the dynein-decorated doublet microtubules (DMTs) in cilia and flagellar axoneme. Plays a key role in the assembly or attachment of the inner dynein arm to microtubules in sperm flagella and tracheal cilia. Forms filamentous polymers in the walls of ciliary and flagellar microtubules. In Macaca fascicularis (Crab-eating macaque), this protein is Tektin-2 (TEKT2).